A 273-amino-acid chain; its full sequence is 2,3,4,5-tetrahydropyridine-2,6-dicarboxylate N-succinyltransferase (273 aa).

Arg-105 and Asp-142 together coordinate substrate.

This sequence belongs to the transferase hexapeptide repeat family. In terms of assembly, homotrimer.

The protein localises to the cytoplasm. The enzyme catalyses (S)-2,3,4,5-tetrahydrodipicolinate + succinyl-CoA + H2O = (S)-2-succinylamino-6-oxoheptanedioate + CoA. Its pathway is amino-acid biosynthesis; L-lysine biosynthesis via DAP pathway; LL-2,6-diaminopimelate from (S)-tetrahydrodipicolinate (succinylase route): step 1/3. This is 2,3,4,5-tetrahydropyridine-2,6-dicarboxylate N-succinyltransferase from Bordetella bronchiseptica (strain ATCC BAA-588 / NCTC 13252 / RB50) (Alcaligenes bronchisepticus).